We begin with the raw amino-acid sequence, 410 residues long: Shaggy-related protein kinase epsilon (410 aa).

Residue Ala2 is modified to N-acetylalanine. One can recognise a Protein kinase domain in the interval 74 to 358; the sequence is YMAERIVGQG…AMEAIVHPFF (285 aa). ATP-binding positions include 80–88 and Lys103; that span reads VGQGSFGIV. Asp199 functions as the Proton acceptor in the catalytic mechanism. At Tyr234 the chain carries Phosphotyrosine.

This sequence belongs to the protein kinase superfamily. CMGC Ser/Thr protein kinase family. GSK-3 subfamily. In terms of assembly, binds to KIB1. Post-translationally, autophosphorylated mainly on threonine and serine residues.

It catalyses the reaction L-seryl-[protein] + ATP = O-phospho-L-seryl-[protein] + ADP + H(+). The catalysed reaction is L-threonyl-[protein] + ATP = O-phospho-L-threonyl-[protein] + ADP + H(+). Its function is as follows. May mediate extracellular signals to regulate transcription in differentiating cells. The chain is Shaggy-related protein kinase epsilon (ASK5) from Arabidopsis thaliana (Mouse-ear cress).